A 194-amino-acid chain; its full sequence is Potassium-transporting ATPase KdpC subunit (194 aa).

A helical membrane pass occupies residues L12–F34.

It belongs to the KdpC family. In terms of assembly, the system is composed of three essential subunits: KdpA, KdpB and KdpC.

The protein localises to the cell inner membrane. Part of the high-affinity ATP-driven potassium transport (or Kdp) system, which catalyzes the hydrolysis of ATP coupled with the electrogenic transport of potassium into the cytoplasm. This subunit acts as a catalytic chaperone that increases the ATP-binding affinity of the ATP-hydrolyzing subunit KdpB by the formation of a transient KdpB/KdpC/ATP ternary complex. This is Potassium-transporting ATPase KdpC subunit from Salmonella heidelberg (strain SL476).